The following is a 493-amino-acid chain: tRNA-2-methylthio-N(6)-dimethylallyladenosine synthase (493 aa).

Positions 1-14 (MPMTGLLQTTLSTA) are enriched in polar residues. Residues 1-31 (MPMTGLLQTTLSTADQDRSGPAATTGDTPAR) form a disordered region. The 121-residue stretch at 35–155 (KRLHVITWGC…LGGMVRRAMN (121 aa)) folds into the MTTase N-terminal domain. Residues Cys44, Cys80, Cys118, Cys199, Cys203, and Cys206 each coordinate [4Fe-4S] cluster. Positions 185–417 (LAGGRTAFLT…QALLRTQQEA (233 aa)) constitute a Radical SAM core domain. Residues 420–482 (TACIGKTVNV…TNSLSATLPD (63 aa)) enclose the TRAM domain.

This sequence belongs to the methylthiotransferase family. MiaB subfamily. As to quaternary structure, monomer. The cofactor is [4Fe-4S] cluster.

It is found in the cytoplasm. The catalysed reaction is N(6)-dimethylallyladenosine(37) in tRNA + (sulfur carrier)-SH + AH2 + 2 S-adenosyl-L-methionine = 2-methylsulfanyl-N(6)-dimethylallyladenosine(37) in tRNA + (sulfur carrier)-H + 5'-deoxyadenosine + L-methionine + A + S-adenosyl-L-homocysteine + 2 H(+). In terms of biological role, catalyzes the methylthiolation of N6-(dimethylallyl)adenosine (i(6)A), leading to the formation of 2-methylthio-N6-(dimethylallyl)adenosine (ms(2)i(6)A) at position 37 in tRNAs that read codons beginning with uridine. This Granulibacter bethesdensis (strain ATCC BAA-1260 / CGDNIH1) protein is tRNA-2-methylthio-N(6)-dimethylallyladenosine synthase.